A 348-amino-acid polypeptide reads, in one-letter code: Dihydroorotase (348 aa).

Zn(2+) contacts are provided by His-17 and His-19. Substrate is bound by residues 19-21 (HLR) and Asn-45. The Zn(2+) site is built by Lys-103, His-140, and His-178. N6-carboxylysine is present on Lys-103. His-140 lines the substrate pocket. Leu-223 lines the substrate pocket. Asp-251 contributes to the Zn(2+) binding site. The active site involves Asp-251. 2 residues coordinate substrate: His-255 and Ala-267.

Belongs to the metallo-dependent hydrolases superfamily. DHOase family. Class II DHOase subfamily. As to quaternary structure, homodimer. The cofactor is Zn(2+).

It catalyses the reaction (S)-dihydroorotate + H2O = N-carbamoyl-L-aspartate + H(+). The protein operates within pyrimidine metabolism; UMP biosynthesis via de novo pathway; (S)-dihydroorotate from bicarbonate: step 3/3. Functionally, catalyzes the reversible cyclization of carbamoyl aspartate to dihydroorotate. The chain is Dihydroorotase from Salmonella heidelberg (strain SL476).